The chain runs to 968 residues: RNA polymerase-associated protein RapA (968 aa).

The region spanning 164 to 334 (DVGRRHAPRV…FARLRLLDPN (171 aa)) is the Helicase ATP-binding domain. Residue 177 to 184 (DEVGLGKT) participates in ATP binding. Residues 280-283 (DEAH) carry the DEAH box motif. Residues 490–644 (RVEWLMGYLT…TCPTGRTVYD (155 aa)) form the Helicase C-terminal domain.

This sequence belongs to the SNF2/RAD54 helicase family. RapA subfamily. As to quaternary structure, interacts with the RNAP. Has a higher affinity for the core RNAP than for the holoenzyme. Its ATPase activity is stimulated by binding to RNAP.

Transcription regulator that activates transcription by stimulating RNA polymerase (RNAP) recycling in case of stress conditions such as supercoiled DNA or high salt concentrations. Probably acts by releasing the RNAP, when it is trapped or immobilized on tightly supercoiled DNA. Does not activate transcription on linear DNA. Probably not involved in DNA repair. The protein is RNA polymerase-associated protein RapA of Klebsiella pneumoniae subsp. pneumoniae (strain ATCC 700721 / MGH 78578).